The following is a 768-amino-acid chain: Telomere repeats-binding bouquet formation protein 1 (768 aa).

2 ARM repeats span residues 101 to 145 (ELFQ…REVG) and 341 to 384 (NGLP…GQNS). Residues 399 to 448 (ETLREHWKAAKEILCRIKQFEKGGKEEKQQNRSGHYKDNTPSMKVNIQTN) adopt a coiled-coil conformation. Basic and acidic residues-rich tracts occupy residues 422–436 (GKEEKQQNRSGHYKD) and 461–475 (RAEDKDINQSRELRS). Disordered regions lie at residues 422-441 (GKEEKQQNRSGHYKDNTPSM) and 454-475 (ADSTGGTRAEDKDINQSRELRS). The interaction with TERF1 stretch occupies residues 524 to 700 (QNLDKEKTFD…EAMERRSPVP (177 aa)). Residue Thr648 is modified to Phosphothreonine. Positions 707-760 (KKRRIRKDFTKEEVNYLFHGVKTMGNHWNSILWSFPFQKGRRAVDLAHKYHRLI) constitute a Myb-like domain.

The protein belongs to the TERB1 family. In terms of assembly, component of the MAJIN-TERB1-TERB2 complex, composed of MAJIN, TERB1 and TERB2. Interacts with TERF1, STAG3 and SUN1. Interacts (via Myb-like domain) with the cohesin complex; probably mediated via interaction with STAG3. In terms of processing, phosphorylated by CDK. Phosphorylation by CDK takes place in late prophase when the cap exchange is prominent. is important for the stabilization of telomere attachment but dispenable for the cap exchange. In terms of tissue distribution, expressed in testis and fetal oocytes.

Its subcellular location is the chromosome. It localises to the telomere. It is found in the nucleus inner membrane. In terms of biological role, meiosis-specific telomere-associated protein involved in meiotic telomere attachment to the nucleus inner membrane, a crucial step for homologous pairing and synapsis. Component of the MAJIN-TERB1-TERB2 complex, which promotes telomere cap exchange by mediating attachment of telomeric DNA to the inner nuclear membrane and replacement of the protective cap of telomeric chromosomes: in early meiosis, the MAJIN-TERB1-TERB2 complex associates with telomeric DNA and the shelterin/telosome complex. During prophase, the complex matures and promotes release of the shelterin/telosome complex from telomeric DNA. In the MAJIN-TERB1-TERB2 complex, TERB1 probably mediates association with the shelterin/telosome complex via interaction with TERF1, promoting priming telomeric DNA attachment'. Promotes telomere association with the nuclear envelope and deposition of the SUN-KASH/LINC complex. Also recruits cohesin to telomeres to develop structural rigidity. The chain is Telomere repeats-binding bouquet formation protein 1 from Mus musculus (Mouse).